A 502-amino-acid chain; its full sequence is uncharacterized protein (502 aa).

2 helical membrane-spanning segments follow: residues 10–30 (NLTLNLTIIFLIFCNISIXIF) and 473–493 (FSLIIVNLIILPTIILIFGLV).

Its subcellular location is the cell membrane. This is an uncharacterized protein from Borreliella burgdorferi (strain ATCC 35210 / DSM 4680 / CIP 102532 / B31) (Borrelia burgdorferi).